The primary structure comprises 202 residues: Coiled-coil domain-containing protein 85B (202 aa).

Position 1 is an N-acetylmethionine (Met-1). 2 coiled-coil regions span residues 44–82 (RLMQ…DLCC) and 118–141 (QKLA…KELC). Residues 152 to 162 (GGPGGAVGSGA) are compositionally biased toward gly residues. Residues 152 to 202 (GGPGGAVGSGAGPTPELALPPCGPRDLGDGSSSTGSVGSPDQLPLACSPDD) form a disordered region. Residues 180-190 (DGSSSTGSVGS) are compositionally biased toward low complexity.

The protein belongs to the CCDC85 family. In terms of assembly, interacts with CEBPB. May interact with CEBPD. Interacts with EURL. Interacts with MCRS1. Interacts with TCF7L2; competes with CTNNB1. Interacts with ANKRD26. Interacts with the beta-catenin family proteins ARVCF, CTNND1, CTNND2 and PKP4. As to expression, expressed in white and brown adipose tissue.

The protein resides in the nucleus. It is found in the cytoplasm. The protein localises to the cytoskeleton. Its subcellular location is the microtubule organizing center. It localises to the centrosome. The protein resides in the cell junction. It is found in the adherens junction. Its function is as follows. Functions as a transcriptional repressor. May inhibit the activity of CTNNB1 in a TP53-dependent manner and thus regulate cell growth. May function in adipocyte differentiation, negatively regulating mitotic clonal expansion. Plays a role in cell-cell adhesion and epithelium development through its interaction with proteins of the beta-catenin family. The sequence is that of Coiled-coil domain-containing protein 85B (Ccdc85b) from Mus musculus (Mouse).